The primary structure comprises 495 residues: Probable staphylococcal-like nuclease CAN4 (495 aa).

The N-myristoyl glycine moiety is linked to residue glycine 2. A lipid anchor (S-palmitoyl cysteine) is attached at cysteine 11. Disordered stretches follow at residues aspartate 45–leucine 68 and leucine 81–proline 101. Over residues leucine 50–proline 66 the composition is skewed to pro residues. Positions lysine 297–tyrosine 470 constitute a TNase-like domain. A Ca(2+)-binding site is contributed by aspartate 310. Residue arginine 377 is part of the active site. Aspartate 382 lines the Ca(2+) pocket. Active-site residues include glutamate 385 and arginine 419.

Belongs to the thermonuclease family. It depends on Ca(2+) as a cofactor.

The protein resides in the cell membrane. In terms of biological role, enzyme that catalyzes the hydrolysis of both DNA and RNA at the 5' position of the phosphodiester bond. This is Probable staphylococcal-like nuclease CAN4 from Oryza sativa subsp. japonica (Rice).